Here is a 303-residue protein sequence, read N- to C-terminus: tRNA dimethylallyltransferase (303 aa).

Residue 9-16 (GPTAVGKT) coordinates ATP. 11 to 16 (TAVGKT) lines the substrate pocket. Positions 34–37 (DSRQ) are interaction with substrate tRNA.

This sequence belongs to the IPP transferase family. In terms of assembly, monomer. Mg(2+) serves as cofactor.

It carries out the reaction adenosine(37) in tRNA + dimethylallyl diphosphate = N(6)-dimethylallyladenosine(37) in tRNA + diphosphate. Its function is as follows. Catalyzes the transfer of a dimethylallyl group onto the adenine at position 37 in tRNAs that read codons beginning with uridine, leading to the formation of N6-(dimethylallyl)adenosine (i(6)A). In Petrotoga mobilis (strain DSM 10674 / SJ95), this protein is tRNA dimethylallyltransferase.